Here is a 141-residue protein sequence, read N- to C-terminus: Putative pre-16S rRNA nuclease (141 aa).

This sequence belongs to the YqgF nuclease family.

Its subcellular location is the cytoplasm. Its function is as follows. Could be a nuclease involved in processing of the 5'-end of pre-16S rRNA. This is Putative pre-16S rRNA nuclease from Cupriavidus necator (strain ATCC 17699 / DSM 428 / KCTC 22496 / NCIMB 10442 / H16 / Stanier 337) (Ralstonia eutropha).